The following is a 289-amino-acid chain: ATP synthase gamma chain (289 aa).

The protein belongs to the ATPase gamma chain family. In terms of assembly, F-type ATPases have 2 components, CF(1) - the catalytic core - and CF(0) - the membrane proton channel. CF(1) has five subunits: alpha(3), beta(3), gamma(1), delta(1), epsilon(1). CF(0) has three main subunits: a, b and c.

The protein localises to the cell inner membrane. Its function is as follows. Produces ATP from ADP in the presence of a proton gradient across the membrane. The gamma chain is believed to be important in regulating ATPase activity and the flow of protons through the CF(0) complex. The sequence is that of ATP synthase gamma chain from Phocaeicola vulgatus (strain ATCC 8482 / DSM 1447 / JCM 5826 / CCUG 4940 / NBRC 14291 / NCTC 11154) (Bacteroides vulgatus).